A 563-amino-acid polypeptide reads, in one-letter code: Arginine--tRNA ligase (563 aa).

The 'HIGH' region signature appears at 122 to 132 (PNIAKPISMGH).

The protein belongs to the class-I aminoacyl-tRNA synthetase family. As to quaternary structure, monomer.

It is found in the cytoplasm. It carries out the reaction tRNA(Arg) + L-arginine + ATP = L-arginyl-tRNA(Arg) + AMP + diphosphate. The chain is Arginine--tRNA ligase from Enterococcus faecalis (strain ATCC 700802 / V583).